The primary structure comprises 208 residues: MKKLNTLLLVLGSLVATPSFADDSQALQDQLASLKSFKAQFSQKVTDKQGQAVMQGEGTIALQQPMMIRWQQTNPDDTLFVSNGDKTYYFDSFAEQVTIMQTSSLIDSTPFVLLTSKDPAQWEKYSVLATNSGFSVTPNKGVESQVEQLDITFAGNEQGLAKLVVTDNSGQLSSFTFNDAKVNTPLDKSTFEFTPPEGVEIDDQSNGE.

The N-terminal stretch at 1-21 (MKKLNTLLLVLGSLVATPSFA) is a signal peptide. The tract at residues 188-208 (KSTFEFTPPEGVEIDDQSNGE) is disordered. The segment covering 199-208 (VEIDDQSNGE) has biased composition (acidic residues).

It belongs to the LolA family. As to quaternary structure, monomer.

Its subcellular location is the periplasm. Functionally, participates in the translocation of lipoproteins from the inner membrane to the outer membrane. Only forms a complex with a lipoprotein if the residue after the N-terminal Cys is not an aspartate (The Asp acts as a targeting signal to indicate that the lipoprotein should stay in the inner membrane). In Pseudoalteromonas translucida (strain TAC 125), this protein is Outer-membrane lipoprotein carrier protein.